A 425-amino-acid chain; its full sequence is Putative chloroquine resistance transporter (425 aa).

At 1 to 56 (MTGIKKGKNKKKNMKNDDRYKELDSLITNGSEIGNNSGRSCVKRFFKIIGNEMKNN) the chain is on the cytoplasmic side. Residues 57–77 (VYVYLLSILYLCVCVMNKVFA) traverse the membrane as a helical segment. The Vacuolar portion of the chain corresponds to 78–88 (KRTLNKMGNYS). Residue N86 is glycosylated (N-linked (GlcNAc...) asparagine). The helical transmembrane segment at 89 to 109 (FVTSETHNIICIIVFQLLYFI) threads the bilayer. Topologically, residues 110-126 (YRKTSSSSVYKNESQKN) are cytoplasmic. A helical transmembrane segment spans residues 127–147 (FGWQFFLISLLDASTVIISMI). The Vacuolar portion of the chain corresponds to 148–157 (GLTRTTGNIQ). A helical membrane pass occupies residues 158–178 (SFIMQLIIPVNMYFWFMFLGY). Topologically, residues 179–181 (RYH) are cytoplasmic. Residues 182-202 (LFNYLGAFIILITIAVVETFL) traverse the membrane as a helical segment. Over 203-210 (SFETQGEN) the chain is Vacuolar. The helical transmembrane segment at 211–231 (SIIFNLIMISAFNTLSFSNMT) threads the bilayer. Topologically, residues 232 to 249 (REVVFKKHKINILRLNAM) are cytoplasmic. A helical membrane pass occupies residues 250–270 (VVLFQFFTSLLVLPVYNIPFL). Over 271–318 (KEIYMPFSEMSTNINNGLRCLFYGENTIVENCGVGMVKMCDNCEGAWK) the chain is Vacuolar. Disulfide bonds link C290–C313 and C302–C310. A helical membrane pass occupies residues 319–339 (TFITFSFFNICDNLLACYIID). Topologically, residues 340 to 347 (KFSTMTYT) are cytoplasmic. A helical transmembrane segment spans residues 348-368 (IVSCIQGPAITIAYYFKFLAG). Residues 369-378 (DAVRKPRILD) are Vacuolar-facing. Residues 379–399 (FLTLFGYLFGTIIYRIGNIIL) form a helical membrane-spanning segment. Topologically, residues 400–425 (EKKQVIKSQNSNDSEAELTSIETSRA) are cytoplasmic.

It belongs to the CRT-like transporter family.

The protein localises to the vacuole membrane. Functionally, nutrient transporter. Involved in maintaining the osmotic homeostasis of the digestive vacuole. The chain is Putative chloroquine resistance transporter from Plasmodium berghei.